The following is a 165-amino-acid chain: Ribosomal RNA large subunit methyltransferase H (165 aa).

G109 serves as a coordination point for S-adenosyl-L-methionine.

The protein belongs to the RNA methyltransferase RlmH family. Homodimer.

It is found in the cytoplasm. It catalyses the reaction pseudouridine(1915) in 23S rRNA + S-adenosyl-L-methionine = N(3)-methylpseudouridine(1915) in 23S rRNA + S-adenosyl-L-homocysteine + H(+). In terms of biological role, specifically methylates the pseudouridine at position 1915 (m3Psi1915) in 23S rRNA. The protein is Ribosomal RNA large subunit methyltransferase H of Methylorubrum populi (strain ATCC BAA-705 / NCIMB 13946 / BJ001) (Methylobacterium populi).